We begin with the raw amino-acid sequence, 922 residues long: MEDAPERTPSSSESTQPPGLAREPEVVSPGDSEGCARPLDTVPKKLCGYLSKFGGKGPIKGWKCRWFFYDERKCHLYYSRTAQDANPLDSIDLSSAVFDCKADAEEEGTFEIKTPSRVITLKAATKQAMLYWLQQLQMKRWEFHNSPPALPATPAAALAENGPTLHLKLEQEEAELEEFLCPVKTPTGLVGAAAALQPVPAVPSALQNISLKHLGTEIQNTMHNIRGNKQAQAAAHGPLVEDSPQGGEPQSGEQPSISDPSLPEKEPEDPAKSAPRSSVPSGPTQKPKRQSNTFPFFSDGLARSRTAQEKVAALEQQVLMLTKELKSQKELVIILHKALEAAQQEKRASSAYLAATEDRDRLELVRHKVRQIAELNQRVEALEQGRERLAHEAGLREQQVQALQQHVQLLMDKNHAKQQVICKLTQKLTEDLAQPADATNGDFLSQQERMEHLKDDMEAYRTQNRFLNSEIHQVTKIWRKVAEKEKALLTKCAYLQARNCQVESKYLAGLRRLQEAAGAEAGDFPELLQQLIQEALQWEAGEADSVGLSPVSEYDDYGFLTVPDYEMEDLKLLAKIQALEVRSHHLLAHEAVERPLRDRWATLTELTPSAELKQLLRAGVPREHRPRVWRWLVHRRVRHLQAPGCYQELLARGRACEHPAARQIELDLNRTFPTNKHFTCPTSSFPDKLRRVLLAFSWQNPTIGYCQGLNRLAAIALLVLEDEESAFWCLVAIVETILPAEYYSKTLTASQVDQRVLQDLLSEKLPRLTAHLGQHRVDLSLITFNWFLVVFADSLISDILLRVWDAFLYEGTKVVFRYALAIFKYNEEAILQLQDSLEIYQYLRFFTKTICDSRKLMSIAFNDMNPFPMKQLRQLRAAHRERLEAELRELELLKVEYLQRRASLGRAPPEGCVSEDEGEGDS.

The segment at 1–37 is disordered; that stretch reads MEDAPERTPSSSESTQPPGLAREPEVVSPGDSEGCAR. Residues 1 to 168 are interaction with CADH1; sequence MEDAPERTPS…AENGPTLHLK (168 aa). Polar residues predominate over residues 8–17; that stretch reads TPSSSESTQP. In terms of domain architecture, PH spans 43–141; sequence PKKLCGYLSK…WLQQLQMKRW (99 aa). Positions 228–297 are disordered; that stretch reads NKQAQAAAHG…KRQSNTFPFF (70 aa). A compositionally biased stretch (basic and acidic residues) spans 262 to 271; it reads LPEKEPEDPA. Over residues 275-295 the composition is skewed to polar residues; it reads PRSSVPSGPTQKPKRQSNTFP. An interaction with RAC1 region spans residues 298–435; sequence SDGLARSRTA…QKLTEDLAQP (138 aa). 3 coiled-coil regions span residues 302–333, 362–417, and 443–476; these read ARSRTAQEKVAALEQQVLMLTKELKSQKELVI, LELV…NHAK, and FLSQQERMEHLKDDMEAYRTQNRFLNSEIHQVTK. The 193-residue stretch at 619-811 folds into the Rab-GAP TBC domain; that stretch reads GVPREHRPRV…RVWDAFLYEG (193 aa). Positions 869 to 904 form a coiled coil; it reads MKQLRQLRAAHRERLEAELRELELLKVEYLQRRASL. Serine 914 carries the post-translational modification Phosphoserine.

As to quaternary structure, interacts with activated RAC1 and CDH1.

It is found in the cytoplasm. The protein localises to the cytoplasmic vesicle. Its subcellular location is the cell junction. Its function is as follows. Acts as a GTPase-activating protein for RAB7A. Signal effector acting as a linker between RAC1 and RAB7A, leading to RAB7A inactivation and subsequent inhibition of cadherin degradation and reduced cell-cell adhesion. The chain is TBC1 domain family member 2A (Tbc1d2) from Mus musculus (Mouse).